The chain runs to 167 residues: Phosphopantetheine adenylyltransferase (167 aa).

Threonine 9 lines the substrate pocket. Residues 9–10 (TF) and histidine 17 contribute to the ATP site. Substrate-binding residues include lysine 41, leucine 73, and arginine 87. Residues 88-90 (GLR), glutamate 98, and 123-129 (NSYISST) contribute to the ATP site.

The protein belongs to the bacterial CoaD family. In terms of assembly, homohexamer. It depends on Mg(2+) as a cofactor.

The protein localises to the cytoplasm. It catalyses the reaction (R)-4'-phosphopantetheine + ATP + H(+) = 3'-dephospho-CoA + diphosphate. It participates in cofactor biosynthesis; coenzyme A biosynthesis; CoA from (R)-pantothenate: step 4/5. Reversibly transfers an adenylyl group from ATP to 4'-phosphopantetheine, yielding dephospho-CoA (dPCoA) and pyrophosphate. The sequence is that of Phosphopantetheine adenylyltransferase from Chromohalobacter salexigens (strain ATCC BAA-138 / DSM 3043 / CIP 106854 / NCIMB 13768 / 1H11).